The sequence spans 208 residues: Large ribosomal subunit protein uL4 (208 aa).

A disordered region spans residues 45-84 (RQGTHKVKNRSEVRGGGKKPYRQKGTGHARQGSSRSGLMS). Over residues 60 to 71 (GGKKPYRQKGTG) the composition is skewed to basic residues.

This sequence belongs to the universal ribosomal protein uL4 family. Part of the 50S ribosomal subunit.

In terms of biological role, one of the primary rRNA binding proteins, this protein initially binds near the 5'-end of the 23S rRNA. It is important during the early stages of 50S assembly. It makes multiple contacts with different domains of the 23S rRNA in the assembled 50S subunit and ribosome. Forms part of the polypeptide exit tunnel. The chain is Large ribosomal subunit protein uL4 from Prosthecochloris aestuarii (strain DSM 271 / SK 413).